The chain runs to 277 residues: Isoprenyl transferase 1 (277 aa).

The tract at residues 1–30 (MAVRGILGRQRREYRTPEPHPSGARPPKLG) is disordered. Asp42 is a catalytic residue. Residue Asp42 participates in Mg(2+) binding. Residues 43-46 (GNGR), Trp47, Arg55, His59, and 87-89 (STE) each bind substrate. Asn90 (proton acceptor) is an active-site residue. Substrate is bound by residues Trp91, Arg93, Arg210, and 216 to 218 (RTS). Glu229 contributes to the Mg(2+) binding site.

It belongs to the UPP synthase family. In terms of assembly, homodimer. The cofactor is Mg(2+).

In terms of biological role, catalyzes the condensation of isopentenyl diphosphate (IPP) with allylic pyrophosphates generating different type of terpenoids. This is Isoprenyl transferase 1 from Streptomyces coelicolor (strain ATCC BAA-471 / A3(2) / M145).